The following is a 434-amino-acid chain: Cysteine--tRNA ligase (434 aa).

Cysteine 28 contacts Zn(2+). The short motif at proline 30–asparagine 40 is the 'HIGH' region element. Zn(2+) is bound by residues cysteine 207, histidine 232, and glutamate 236. Positions lysine 264–serine 268 match the 'KMSKS' region motif. Lysine 267 is an ATP binding site.

The protein belongs to the class-I aminoacyl-tRNA synthetase family. Monomer. The cofactor is Zn(2+).

Its subcellular location is the cytoplasm. It carries out the reaction tRNA(Cys) + L-cysteine + ATP = L-cysteinyl-tRNA(Cys) + AMP + diphosphate. The sequence is that of Cysteine--tRNA ligase from Acholeplasma laidlawii (strain PG-8A).